The sequence spans 155 residues: Gastrin-releasing peptide (155 aa).

Residues 1–31 (MEGVLLFWKYRALFFLVLCSLVLCKVHLSQA) form the signal peptide. Met60 is modified (methionine amide). Residues 128–155 (FSGAEDNNLKEMLDYLYQMMNMKENTSS) constitute a propeptide that is removed on maturation.

It belongs to the bombesin/neuromedin-B/ranatensin family. As to expression, brain and stomach. In the stomach GRP was localized, at the base of the gastric pits, to occasional cells whose distribution and appearance were consistent with that of gut neuroendocrine cells.

Its subcellular location is the secreted. The protein localises to the cytoplasmic vesicle. The protein resides in the secretory vesicle lumen. Its function is as follows. Stimulates the release of gastrin and other gastrointestinal hormones. The chain is Gastrin-releasing peptide (grp) from Bombina orientalis (Oriental fire-bellied toad).